The chain runs to 239 residues: MSNKKDITVKMSGGKKIREAREKVKPDTLYNLTNAVEQLKSASYVKFDPTLEIVMKLGIDPRHSDQMVRGVVNLPAGTGKIVRVAVICKEEREEEAKSAGADLVGSTNIIDEIKSGKINFDVCIATPDMMAAIGSVARILGPKGLMPNPKLGTVTLDIKNAIKNAKSGQVEYRAEKSGIIHAGLGKLSFSDQDLLKNLNAFIEAVIKAKPSGLKGSYLKAMYLSSTMGASVQIDLTSIA.

Belongs to the universal ribosomal protein uL1 family. As to quaternary structure, part of the 50S ribosomal subunit.

Functionally, binds directly to 23S rRNA. The L1 stalk is quite mobile in the ribosome, and is involved in E site tRNA release. Its function is as follows. Protein L1 is also a translational repressor protein, it controls the translation of the L11 operon by binding to its mRNA. The sequence is that of Large ribosomal subunit protein uL1 from Rickettsia akari (strain Hartford).